The primary structure comprises 34 residues: Photosystem II reaction center protein M (34 aa).

Residues 5–25 (ILGLIATALFIIIPTSFLLIL) traverse the membrane as a helical segment.

The protein belongs to the PsbM family. In terms of assembly, PSII is composed of 1 copy each of membrane proteins PsbA, PsbB, PsbC, PsbD, PsbE, PsbF, PsbH, PsbI, PsbJ, PsbK, PsbL, PsbM, PsbT, PsbX, PsbY, PsbZ, Psb30/Ycf12, at least 3 peripheral proteins of the oxygen-evolving complex and a large number of cofactors. It forms dimeric complexes.

It is found in the plastid. Its subcellular location is the chloroplast thylakoid membrane. Its function is as follows. One of the components of the core complex of photosystem II (PSII). PSII is a light-driven water:plastoquinone oxidoreductase that uses light energy to abstract electrons from H(2)O, generating O(2) and a proton gradient subsequently used for ATP formation. It consists of a core antenna complex that captures photons, and an electron transfer chain that converts photonic excitation into a charge separation. This subunit is found at the monomer-monomer interface. This Nephroselmis olivacea (Green alga) protein is Photosystem II reaction center protein M.